We begin with the raw amino-acid sequence, 387 residues long: Transmembrane protein 120 homolog (387 aa).

Residues 1–39 (MNIDSLKNEWEELNKEFAELESCNRRYIELLEQLHSHQQ) are a coiled coil. A glycan (N-linked (GlcNAc...) asparagine) is linked at Asn111. 6 consecutive transmembrane segments (helical) span residues 130–150 (FKLI…IFNY), 155–175 (LAFI…ESIL), 191–211 (FIST…HWQI), 216–238 (FMYF…KGLL), 264–284 (GLSF…YNAW), and 302–322 (VMSG…LWVV). The segment at 346–387 (RKEMKNSASDLDLSSGSKLSPTATTTTSIATATQTPAEKKET) is disordered. A phosphoserine mark is found at Ser352, Ser354, and Ser365. Residues 352 to 381 (SASDLDLSSGSKLSPTATTTTSIATATQTP) show a composition bias toward low complexity.

The protein belongs to the TMEM120 family.

It is found in the membrane. The protein is Transmembrane protein 120 homolog of Drosophila melanogaster (Fruit fly).